The chain runs to 323 residues: Acetyl esterase (323 aa).

The Involved in the stabilization of the negatively charged intermediate by the formation of the oxyanion hole motif lies at 91–93; that stretch reads HGG. Catalysis depends on residues Ser165, Asp262, and His292.

This sequence belongs to the 'GDXG' lipolytic enzyme family. Homodimer. Interacts with MalT and MelA.

The protein localises to the cytoplasm. Its function is as follows. Displays esterase activity towards short chain fatty esters (acyl chain length of up to 8 carbons). Able to hydrolyze triacetylglycerol (triacetin) and tributyrylglycerol (tributyrin), but not trioleylglycerol (triolein) or cholesterol oleate. Negatively regulates MalT activity by antagonizing maltotriose binding. Inhibits MelA galactosidase activity. This is Acetyl esterase from Salmonella schwarzengrund (strain CVM19633).